A 315-amino-acid polypeptide reads, in one-letter code: Ribosomal RNA small subunit methyltransferase H (315 aa).

S-adenosyl-L-methionine contacts are provided by residues 37–39, Asp-57, Leu-91, Asp-105, and Gln-112; that span reads GGH.

This sequence belongs to the methyltransferase superfamily. RsmH family.

It localises to the cytoplasm. The catalysed reaction is cytidine(1402) in 16S rRNA + S-adenosyl-L-methionine = N(4)-methylcytidine(1402) in 16S rRNA + S-adenosyl-L-homocysteine + H(+). Specifically methylates the N4 position of cytidine in position 1402 (C1402) of 16S rRNA. This chain is Ribosomal RNA small subunit methyltransferase H, found in Syntrophus aciditrophicus (strain SB).